Reading from the N-terminus, the 114-residue chain is uncharacterized protein (114 aa).

This is an uncharacterized protein from Escherichia coli O157:H7.